Consider the following 249-residue polypeptide: Phosphate import ATP-binding protein PstB 2 (249 aa).

In terms of domain architecture, ABC transporter spans 4–244 (IEVRDLDLFY…PKDKRTEDYI (241 aa)). 36-43 (GPSGCGKS) contacts ATP.

It belongs to the ABC transporter superfamily. Phosphate importer (TC 3.A.1.7) family. As to quaternary structure, the complex is composed of two ATP-binding proteins (PstB), two transmembrane proteins (PstC and PstA) and a solute-binding protein (PstS).

It localises to the cell membrane. The catalysed reaction is phosphate(out) + ATP + H2O = ADP + 2 phosphate(in) + H(+). Functionally, part of the ABC transporter complex PstSACB involved in phosphate import. Responsible for energy coupling to the transport system. This is Phosphate import ATP-binding protein PstB 2 from Caldanaerobacter subterraneus subsp. tengcongensis (strain DSM 15242 / JCM 11007 / NBRC 100824 / MB4) (Thermoanaerobacter tengcongensis).